The following is a 208-amino-acid chain: Holliday junction branch migration complex subunit RuvA (208 aa).

Positions Met-1 to Arg-64 are domain I. The interval Val-65–Ile-143 is domain II. A flexible linker region spans residues Ala-144–Arg-152. Residues Thr-153–Arg-208 are domain III.

This sequence belongs to the RuvA family. In terms of assembly, homotetramer. Forms an RuvA(8)-RuvB(12)-Holliday junction (HJ) complex. HJ DNA is sandwiched between 2 RuvA tetramers; dsDNA enters through RuvA and exits via RuvB. An RuvB hexamer assembles on each DNA strand where it exits the tetramer. Each RuvB hexamer is contacted by two RuvA subunits (via domain III) on 2 adjacent RuvB subunits; this complex drives branch migration. In the full resolvosome a probable DNA-RuvA(4)-RuvB(12)-RuvC(2) complex forms which resolves the HJ.

It localises to the cytoplasm. In terms of biological role, the RuvA-RuvB-RuvC complex processes Holliday junction (HJ) DNA during genetic recombination and DNA repair, while the RuvA-RuvB complex plays an important role in the rescue of blocked DNA replication forks via replication fork reversal (RFR). RuvA specifically binds to HJ cruciform DNA, conferring on it an open structure. The RuvB hexamer acts as an ATP-dependent pump, pulling dsDNA into and through the RuvAB complex. HJ branch migration allows RuvC to scan DNA until it finds its consensus sequence, where it cleaves and resolves the cruciform DNA. In Methylorubrum extorquens (strain CM4 / NCIMB 13688) (Methylobacterium extorquens), this protein is Holliday junction branch migration complex subunit RuvA.